Reading from the N-terminus, the 2169-residue chain is Voltage-dependent L-type calcium channel subunit alpha-1C (2169 aa).

Topologically, residues 1–153 are cytoplasmic; it reads MVPLVQPTTP…RACISIVEWK (153 aa). The interval 76–97 is calmodulin-binding; that stretch reads GAALSWQAAIDAGRQAKLMGSA. Over residues 98 to 108 the composition is skewed to polar residues; it reads GNTTISTVSST. A disordered region spans residues 98–127; the sequence is GNTTISTVSSTQRKRQQYGKPKKQSGTTAT. The segment covering 109 to 120 has biased composition (basic residues); sequence QRKRQQYGKPKK. The I repeat unit spans residues 140–437; the sequence is NPIRRACISI…LVLGVLSGEF (298 aa). The chain crosses the membrane as a helical span at residues 154–172; sequence PFEIIILLTIFANCVALAI. Over 173-187 the chain is Extracellular; the sequence is YIPFPEDDSNATNSN. The N-linked (GlcNAc...) asparagine glycan is linked to Asn-182. The helical transmembrane segment at 188-208 threads the bilayer; it reads LERVEYLFLIIFTVEAFLKVI. At 209–217 the chain is on the cytoplasmic side; sequence AYGLLFHPN. The chain crosses the membrane as a helical span at residues 218-238; sequence AYLRNGWNLLDFIIVVVGLFS. Residues 239-261 lie on the Extracellular side of the membrane; the sequence is AILEQATKADGANALGGKGAGFD. Residues 262 to 280 form a helical membrane-spanning segment; it reads VKALRAFRVLRPLRLVSGV. Residues 281 to 297 are Cytoplasmic-facing; sequence PSLQVVLNSIIKAMVPL. The helical transmembrane segment at 298 to 319 threads the bilayer; that stretch reads LHTALLVLFVIIIYAIIGLELF. The Extracellular portion of the chain corresponds to 320-379; that stretch reads MGKMHKTCYNQEGITDVPAEEDPSPCALESGHGRQCQNGTVCKPGWDGPKHGITNFDNFA. Cys-345 and Cys-361 are joined by a disulfide. N-linked (GlcNAc...) asparagine glycosylation is present at Asn-357. An intramembrane region (pore-forming) is located at residues 380–401; it reads FAMLTVFQCITMEGWTDVLYWM. A Selectivity filter of repeat I motif is present at residues 390–393; the sequence is TMEG. A Ca(2+)-binding site is contributed by Glu-392. Residues 402 to 409 are Extracellular-facing; that stretch reads QDAMGYEL. Residues 410-430 form a helical membrane-spanning segment; the sequence is PWVYFVSLVIFGSFFVLNLVL. Topologically, residues 431–553 are cytoplasmic; that stretch reads GVLSGEFSKE…RKCRAAVKSN (123 aa). The tract at residues 457–474 is AID/alpha-interaction domain; mediates interaction with the beta subunit; the sequence is QQLEEDLKGYLDWITQAE. A disordered region spans residues 478–510; that stretch reads PENEDEGVDEEKPRNMSMPTSETESVNTENVAG. Polar residues predominate over residues 494–507; that stretch reads SMPTSETESVNTEN. Residue Ser-498 is modified to Phosphoserine. Phosphothreonine is present on Thr-505. The stretch at 539–785 is one II repeat; it reads NRFCRRKCRA…VFLAIAVDNL (247 aa). Residues 554–572 form a helical membrane-spanning segment; the sequence is VFYWLVIFLVFLNTLTIAS. Residues 573 to 583 lie on the Extracellular side of the membrane; that stretch reads EHYNQPHWLTE. Residues 584-604 form a helical membrane-spanning segment; that stretch reads VQDTANKALLALFTAEMLLKM. The Cytoplasmic portion of the chain corresponds to 605–615; sequence YSLGLQAYFVS. A helical transmembrane segment spans residues 616–635; sequence LFNRLDCFIVCGGILETILV. At 636–644 the chain is on the extracellular side; that stretch reads ETKIMSPLG. A helical transmembrane segment spans residues 645–663; sequence ISVLRCVRLLRIFKITRYW. The Cytoplasmic segment spans residues 664–682; it reads NSLSNLVASLLNSVRSIAS. A helical membrane pass occupies residues 683–702; it reads LLLLLFLFIIIFSLLGMQLF. The Extracellular segment spans residues 703–722; sequence GGKFNFDEMRTRRSTFDNFP. An intramembrane region (pore-forming) is located at residues 723–744; the sequence is QSLLTVFQILTGEDWNSVMYDG. The Selectivity filter of repeat II signature appears at 733 to 736; it reads TGED. Glu-735 is a Ca(2+) binding site. Topologically, residues 745–754 are extracellular; that stretch reads IMAYGGPSFP. A helical transmembrane segment spans residues 755–774; sequence GMLVCIYFIILFICGNYILL. Residues 775–929 lie on the Cytoplasmic side of the membrane; it reads NVFLAIAVDN…LQCHRIVNDT (155 aa). The tract at residues 793-890 is disordered; sequence SAQKEEEEEK…EMPVGPRPRP (98 aa). A compositionally biased stretch (basic and acidic residues) spans 812 to 835; it reads SPEKKQEVVEKPAVEETKEEKIEL. Phosphoserine is present on residues Ser-837 and Ser-844. The interval 858-905 is interaction with STAC2; it reads NENEDKSPYPNPDAAGEEDEEEPEMPVGPRPRPLSELHLKEKAVPMPE. A compositionally biased stretch (acidic residues) spans 872–881; it reads AGEEDEEEPE. An III repeat occupies 916–1198; sequence NRFRLQCHRI…IFVGFVIVTF (283 aa). The helical transmembrane segment at 930–948 threads the bilayer; sequence IFTNLILFFILLSSISLAA. Topologically, residues 949–960 are extracellular; the sequence is EDPVQHTSFRNH. The chain crosses the membrane as a helical span at residues 961-980; sequence ILFYFDIVFTTIFTIEIALK. At 981-996 the chain is on the cytoplasmic side; the sequence is MTAYGAFLHKGSFCRN. Residues 997–1015 traverse the membrane as a helical segment; the sequence is YFNILDLLVVSVSLISFGI. The Extracellular segment spans residues 1016–1022; sequence QSSAINV. The helical transmembrane segment at 1023 to 1041 threads the bilayer; that stretch reads VKILRVLRVLRPLRAINRA. At 1042-1060 the chain is on the cytoplasmic side; it reads KGLKHVVQCVFVAIRTIGN. A helical transmembrane segment spans residues 1061–1080; that stretch reads IVIVTTLLQFMFACIGVQLF. At 1081 to 1130 the chain is on the extracellular side; the sequence is KGKLYTCSDSSKQTEAECKGNYITYKDGEVDQPIIQPRSWENSKFDFDNV. Cys-1087 and Cys-1098 are disulfide-bonded. The interval 1118 to 1207 is dihydropyridine binding; it reads RSWENSKFDF…FQEQGEQEYK (90 aa). The segment at residues 1131 to 1151 is an intramembrane region (pore-forming); that stretch reads LAAMMALFTVSTFEGWPELLY. The Selectivity filter of repeat III signature appears at 1142–1145; the sequence is TFEG. Ca(2+) is bound at residue Glu-1144. Residues 1152–1168 are Extracellular-facing; sequence RSIDSHTEDKGPIYNYR. Residues 1169–1190 traverse the membrane as a helical segment; sequence VEISIFFIIYIIIIAFFMMNIF. At 1191–1248 the chain is on the cytoplasmic side; the sequence is VGFVIVTFQEQGEQEYKNCELDKNQRQCVEYALKARPLRRYIPKNQHQYKVWYVVNST. An IV repeat occupies 1235-1508; it reads NQHQYKVWYV…LFVAVVMDNF (274 aa). The helical transmembrane segment at 1249 to 1270 threads the bilayer; it reads YFEYLMFVLILLNTICLAMQHY. Over 1271-1278 the chain is Extracellular; it reads GQSCLFKI. Residues 1279–1300 traverse the membrane as a helical segment; the sequence is AMNILNMLFTGLFTVEMILKLI. Over 1301 to 1310 the chain is Cytoplasmic; that stretch reads AFKPKHYFCD. A helical transmembrane segment spans residues 1311–1330; sequence AWNTFDALIVVGSIVDIAIT. Over 1331-1353 the chain is Extracellular; that stretch reads EVNPAEHTQCSPSMNAEENSRIS. A helical membrane pass occupies residues 1354–1372; that stretch reads ITFFRLFRVMRLVKLLSRG. The Cytoplasmic portion of the chain corresponds to 1373 to 1390; the sequence is EGIRTLLWTFIKSFQALP. Residues 1391-1411 traverse the membrane as a helical segment; it reads YVALLIVMLFFIYAVIGMQVF. At 1412–1433 the chain is on the extracellular side; sequence GKIALNDTTEINRNNNFQTFPQ. Asn-1417 is a glycosylation site (N-linked (GlcNAc...) asparagine). Positions 1434–1452 form an intramembrane region, pore-forming; that stretch reads AVLLLFRCATGEAWQDIML. Residues 1443 to 1446 carry the Selectivity filter of repeat IV motif; the sequence is TGEA. The Extracellular segment spans residues 1453 to 1480; that stretch reads ACMPGKKCAPESDPSNSTEGETPCGSSF. The dihydropyridine binding stretch occupies residues 1459 to 1527; it reads KCAPESDPSN…LGPHHLDEFK (69 aa). Residues Cys-1460 and Cys-1476 are joined by a disulfide bond. Asn-1468 is a glycosylation site (N-linked (GlcNAc...) asparagine). The tract at residues 1473 to 1515 is phenylalkylamine binding; the sequence is ETPCGSSFAVFYFISFYMLCAFLIINLFVAVVMDNFDYLTRDW. Residues 1481-1505 traverse the membrane as a helical segment; it reads AVFYFISFYMLCAFLIINLFVAVVM. Residues 1506 to 2169 lie on the Cytoplasmic side of the membrane; sequence DNFDYLTRDW…ADSRVHVRSL (664 aa). The tract at residues 1640–1667 is important for interaction with STAC1, STAC2 and STAC3; that stretch reads DEVTVGKFYATFLIQEYFRKFKKRKEQG. A calmodulin-binding IQ region region spans residues 1646-1666; that stretch reads KFYATFLIQEYFRKFKKRKEQ. The tract at residues 1680–1699 is important for localization in at the junctional membrane; the sequence is LQAGLRTLHDIGPEIRRAIS. Residues Ser-1699 and Ser-1720 each carry the phosphoserine modification. 2 disordered regions span residues 1761 to 1793 and 1894 to 1920; these read KAGNNQGDTESPSHEKLVDSTFTPSSYSSTGSN and ENRQLTPPEEDKGDTRPSPKKGFLRSA. The segment covering 1780 to 1792 has biased composition (polar residues); the sequence is STFTPSSYSSTGS. Over residues 1894 to 1910 the composition is skewed to basic and acidic residues; it reads ENRQLTPPEEDKGDTRP. Ser-1927 carries the post-translational modification Phosphoserine.

Belongs to the calcium channel alpha-1 subunit (TC 1.A.1.11) family. CACNA1C subfamily. In terms of assembly, component of a calcium channel complex consisting of a pore-forming alpha subunit (CACNA1C) and ancillary beta, gamma and delta subunits. The channel complex contains alpha, beta, gamma and delta subunits in a 1:1:1:1 ratio, i.e. it contains only one of each type of subunit. CACNA1C channel activity is modulated by ancillary subunits, such as CACNB1, CACNB2, CACNB3, CACNA2D1 and CACNA2D4. Interacts with CACNB1. Interacts with CACNB2. Identified in a complex with CACNA2D4 and CACNB3. Interacts with CACNB3. Interacts with CACNA2D1. Interacts with CACNA2D4. Interacts with the gamma subunits CACNG4, CACNG6, CACNG7 and CACNG8. Interacts with CALM1. Interacts (via the N-terminus and the C-terminal C and IQ motifs) with CABP1; this inhibits Ca(2+)-dependent channel inactivation. The binding via the C motif is calcium independent whereas the binding via IQ requires the presence of calcium and is mutually exclusive with calmodulin binding. The binding to the cytoplasmic N-terminal domain is calcium independent but is essential for the channel modulation. Interacts (via C-terminal CDB motif) with CABP5; in a calcium-dependent manner. Interacts with CIB1; the interaction increases upon cardiomyocytes hypertrophy. Interacts with STAC2 and STAC3; this inhibits channel inactivation. Post-translationally, phosphorylation by PKA at Ser-1927 activates the channel. Elevated levels of blood glucose lead to increased phosphorylation by PKA. Expressed in heart. Expressed in uterus.

The protein resides in the cell membrane. The protein localises to the sarcolemma. Its subcellular location is the perikaryon. It is found in the postsynaptic density membrane. It localises to the cell projection. The protein resides in the dendrite. The protein localises to the T-tubule. The enzyme catalyses Ca(2+)(in) = Ca(2+)(out). With respect to regulation, inhibited by dihydropyridines (DHP), such as isradipine. Inhibited by nifedipine. Channel activity is regulated by Ca(2+) and calmodulin. Binding of STAC1, STAC2 or STAC3 to a region that overlaps with the calmodulin binding site inhibits channel inactivation by Ca(2+) and calmodulin. Binding of calmodulin or CABP1 at the same regulatory sites results in opposite effects on the channel function. Shear stress and pressure increases calcium channel activity. Pore-forming, alpha-1C subunit of the voltage-gated calcium channel that gives rise to L-type calcium currents. Mediates influx of calcium ions into the cytoplasm, and thereby triggers calcium release from the sarcoplasm. Plays an important role in excitation-contraction coupling in the heart. Required for normal heart development and normal regulation of heart rhythm. Required for normal contraction of smooth muscle cells in blood vessels and in the intestine. Essential for normal blood pressure regulation via its role in the contraction of arterial smooth muscle cells. Long-lasting (L-type) calcium channels belong to the 'high-voltage activated' (HVA) group. In Cavia porcellus (Guinea pig), this protein is Voltage-dependent L-type calcium channel subunit alpha-1C (CACNA1C).